The chain runs to 421 residues: NADH-quinone oxidoreductase subunit F (421 aa).

Residue 54–63 (GRGGAGFSTG) participates in NAD(+) binding. 166–213 (GAGAYICGEETALLESLEGKKGMPRLKPPFPAGFGLYGCPTTINNVES) is an FMN binding site. 4 residues coordinate [4Fe-4S] cluster: Cys344, Cys347, Cys350, and Cys390.

Belongs to the complex I 51 kDa subunit family. Requires FMN as cofactor. [4Fe-4S] cluster serves as cofactor.

It carries out the reaction a quinone + NADH + 5 H(+)(in) = a quinol + NAD(+) + 4 H(+)(out). In terms of biological role, NDH-1 shuttles electrons from NADH, via FMN and iron-sulfur (Fe-S) centers, to quinones in the respiratory chain. Couples the redox reaction to proton translocation (for every two electrons transferred, four hydrogen ions are translocated across the cytoplasmic membrane), and thus conserves the redox energy in a proton gradient. The sequence is that of NADH-quinone oxidoreductase subunit F (nuoF) from Rickettsia rickettsii (strain Sheila Smith).